The sequence spans 318 residues: Methionyl-tRNA formyltransferase (318 aa).

112–115 is a (6S)-5,6,7,8-tetrahydrofolate binding site; sequence SILP.

The protein belongs to the Fmt family.

The catalysed reaction is L-methionyl-tRNA(fMet) + (6R)-10-formyltetrahydrofolate = N-formyl-L-methionyl-tRNA(fMet) + (6S)-5,6,7,8-tetrahydrofolate + H(+). Attaches a formyl group to the free amino group of methionyl-tRNA(fMet). The formyl group appears to play a dual role in the initiator identity of N-formylmethionyl-tRNA by promoting its recognition by IF2 and preventing the misappropriation of this tRNA by the elongation apparatus. This chain is Methionyl-tRNA formyltransferase, found in Haemophilus influenzae (strain PittGG).